The following is a 358-amino-acid chain: DNA polymerase IV (358 aa).

The region spanning 4 to 185 is the UmuC domain; sequence IIHIDMDCYF…LSLRKIPGVG (182 aa). Residues Asp8 and Asp103 each coordinate Mg(2+). Glu104 is a catalytic residue.

It belongs to the DNA polymerase type-Y family. Monomer. Requires Mg(2+) as cofactor.

The protein localises to the cytoplasm. The enzyme catalyses DNA(n) + a 2'-deoxyribonucleoside 5'-triphosphate = DNA(n+1) + diphosphate. Functionally, poorly processive, error-prone DNA polymerase involved in untargeted mutagenesis. Copies undamaged DNA at stalled replication forks, which arise in vivo from mismatched or misaligned primer ends. These misaligned primers can be extended by PolIV. Exhibits no 3'-5' exonuclease (proofreading) activity. May be involved in translesional synthesis, in conjunction with the beta clamp from PolIII. The protein is DNA polymerase IV of Shewanella baltica (strain OS185).